Reading from the N-terminus, the 195-residue chain is Heat shock protein beta-8 (195 aa).

A Phosphoserine modification is found at serine 56. Threonine 62 bears the Phosphothreonine mark. Asymmetric dimethylarginine is present on residues arginine 70 and arginine 77. The sHSP domain maps to 73 to 184 (TATARFGVPA…TFGESSFNNE (112 aa)). Positions 175-195 (TFGESSFNNELPQDSQEVTCT) are disordered. Over residues 176 to 195 (FGESSFNNELPQDSQEVTCT) the composition is skewed to polar residues.

The protein belongs to the small heat shock protein (HSP20) family. As to quaternary structure, monomer. Forms a ternary complex with BAG3 and HSPA1A. Component of the chaperone-assisted selective autophagy (CASA) complex consisting of BAG3, HSPA8/HSC70, HSPB8 and STUB1/CHIP. Interacts with HSPB1. Interacts with DNAJB6. Interacts with BAG3. Post-translationally, phosphorylated.

It is found in the cytoplasm. Its subcellular location is the nucleus. In terms of biological role, involved in the chaperone-assisted selective autophagy (CASA), a crucial process for protein quality control, particularly in mechanical strained cells and tissues such as muscle. Displays temperature-dependent chaperone activity. This Macaca mulatta (Rhesus macaque) protein is Heat shock protein beta-8 (HSPB8).